Consider the following 193-residue polypeptide: D-alanyl-D-alanine dipeptidase (193 aa).

H98 and D105 together coordinate Zn(2+). E162 functions as the Proton donor/acceptor in the catalytic mechanism. H165 provides a ligand contact to Zn(2+).

It belongs to the peptidase M15D family. Requires Zn(2+) as cofactor.

It is found in the cytoplasm. It catalyses the reaction D-alanyl-D-alanine + H2O = 2 D-alanine. Catalyzes hydrolysis of the D-alanyl-D-alanine dipeptide. May have a role in cell-wall turnover. The protein is D-alanyl-D-alanine dipeptidase of Escherichia coli (strain K12).